A 58-amino-acid chain; its full sequence is 6.4 kDa protein (58 aa).

This Pseudomonas phage Pf3 (Bacteriophage Pf3) protein is 6.4 kDa protein.